Here is an 819-residue protein sequence, read N- to C-terminus: DNA topoisomerase 4 subunit A (819 aa).

A Topo IIA-type catalytic domain is found at 30 to 496; sequence LPDIRDGLKP…QIIEIDTASL (467 aa). Residue Tyr118 is the O-(5'-phospho-DNA)-tyrosine intermediate of the active site.

This sequence belongs to the type II topoisomerase GyrA/ParC subunit family. ParC type 2 subfamily. In terms of assembly, heterotetramer composed of ParC and ParE.

The protein localises to the cell membrane. The catalysed reaction is ATP-dependent breakage, passage and rejoining of double-stranded DNA.. Functionally, topoisomerase IV is essential for chromosome segregation. It relaxes supercoiled DNA. Performs the decatenation events required during the replication of a circular DNA molecule. In Streptococcus pyogenes serotype M3 (strain ATCC BAA-595 / MGAS315), this protein is DNA topoisomerase 4 subunit A.